We begin with the raw amino-acid sequence, 356 residues long: ATP-dependent 6-phosphofructokinase (356 aa).

ATP contacts are provided by residues G15, 78–79 (KG), and 115–118 (GEGT). E116 contributes to the Mg(2+) binding site. Residues 138–140 (TID), R175, 182–184 (MGR), E235, R272, and 278–281 (HLQR) contribute to the substrate site. The active-site Proton acceptor is D140.

The protein belongs to the phosphofructokinase type A (PFKA) family. Mixed-substrate PFK group III subfamily. As to quaternary structure, homodimer or homotetramer. Mg(2+) is required as a cofactor.

It is found in the cytoplasm. The enzyme catalyses beta-D-fructose 6-phosphate + ATP = beta-D-fructose 1,6-bisphosphate + ADP + H(+). It participates in carbohydrate degradation; glycolysis; D-glyceraldehyde 3-phosphate and glycerone phosphate from D-glucose: step 3/4. Catalyzes the phosphorylation of D-fructose 6-phosphate to fructose 1,6-bisphosphate by ATP, the first committing step of glycolysis. This chain is ATP-dependent 6-phosphofructokinase, found in Chloroflexus aurantiacus (strain ATCC 29366 / DSM 635 / J-10-fl).